A 104-amino-acid chain; its full sequence is L-rhamnose mutarotase (104 aa).

A substrate-binding site is contributed by tyrosine 18. Histidine 22 acts as the Proton donor in catalysis. Substrate is bound by residues tyrosine 41 and tryptophan 76–tryptophan 77.

The protein belongs to the rhamnose mutarotase family. Homodimer.

The protein resides in the cytoplasm. It carries out the reaction alpha-L-rhamnose = beta-L-rhamnose. It functions in the pathway carbohydrate metabolism; L-rhamnose metabolism. Involved in the anomeric conversion of L-rhamnose. In Rhizobium meliloti (strain 1021) (Ensifer meliloti), this protein is L-rhamnose mutarotase.